We begin with the raw amino-acid sequence, 292 residues long: MTAAAPTLAQALDEATGQLTGAGITADAARADTRLLAAHACQVAPGDLDTCLAGPVPPRFWHYVRRRLTREPAERIVGHAYFMGHRFDLAPGVFVPKPETEEITRDAIARLEALVRRGTTAPLVVDLCAGPGTMAVTLARHVPAARVLGIELSQAAARAARRNARGTGARIVQGDARDAFPELSGTVDLVVTNPPYIPIGLRTSAPEVLEHDPPLALWAGEEGLGMIRAMERTAARLLAPGGVLLLEHGSYQLASVPALFRATGRWSHASSRPTCNDGCLTAVRNHTCAPPA.

128–132 provides a ligand contact to S-adenosyl-L-methionine; sequence CAGPG.

Belongs to the protein N5-glutamine methyltransferase family.

It catalyses the reaction 4-amino-L-phenylalanine + S-adenosyl-L-methionine = 4-methylamino-L-phenylalanine + S-adenosyl-L-homocysteine + H(+). It carries out the reaction 4-methylamino-L-phenylalanine + S-adenosyl-L-methionine = 4-dimethylamino-L-phenylalanine + S-adenosyl-L-homocysteine + H(+). It participates in antibiotic biosynthesis. Functionally, involved in pristinamycin I biosynthesis. Catalyzes the SAM-dependent methylation of 4-amino-L-phenylalanine (PAPA) to 4-methylamino-L-phenylalanine (MMPAPA), and of MMPAPA to 4-dimethylamino-L-phenylalanine (DMPAPA). This Streptomyces pristinaespiralis protein is 4-amino-L-phenylalanine/4-methylamino-L-phenylalanine methyltransferase.